Reading from the N-terminus, the 367-residue chain is MESLFPAPFWEVLYGSHFQGNLSLLNETVPHHLLLNASHSAFLPLGLKVTIVGLYLAVCIGGLLGNCLVMYVILRHTKMKTATNIYIFNLALADTLVLLTLPFQGTDILLGFWPFGNALCKTVIAIDYYNMFTSTFTLTAMSVDRYVAICHPIRALDVRTSSKAQAVNVAIWALASVVGVPVAIMGSAQVEDEEIECLVEIPAPQDYWGPVFAICIFLFSFIIPVLIISVCYSLMIRRLRGVRLLSGSREKDRNLRRITRLVLVVVAVFVGCWTPVQVFVLVQGLGVQPGSETAVAILRFCTALGYVNSCLNPILYAFLDENFKACFRKFCCASALHREMQVSDRVRSIAKDVGLGCKTSETVPRPA.

At M1–L45 the chain is on the extracellular side. N21, N26, and N36 each carry an N-linked (GlcNAc...) asparagine glycan. A helical membrane pass occupies residues G46–Y71. Residues V72–N84 are Cytoplasmic-facing. Residues I85–T106 traverse the membrane as a helical segment. At D107 to K121 the chain is on the extracellular side. Residues C120 and C197 are joined by a disulfide bond. A helical transmembrane segment spans residues T122–V143. Topologically, residues D144–S162 are cytoplasmic. The helical transmembrane segment at K163–M185 threads the bilayer. Residues G186–W208 lie on the Extracellular side of the membrane. The chain crosses the membrane as a helical span at residues G209–S233. The Cytoplasmic segment spans residues L234 to L261. A helical transmembrane segment spans residues V262–V282. Residues Q283–I297 are Extracellular-facing. The helical transmembrane segment at L298–L319 threads the bilayer. At D320–A367 the chain is on the cytoplasmic side. The S-palmitoyl cysteine moiety is linked to residue C331.

Belongs to the G-protein coupled receptor 1 family. Post-translationally, phosphorylation at Ser-360 requires GRK3. In the brain, isoform KOR3 and isoform KOR3C are most abundant in hypothalamus and periaqueductal gray. Isoform KOR3A is highly expressed in cortex, striatum and brainstem. Isoform KOR3D is highly expressed in cerebellum, hypothalamus and brainstem. Detected in spleen lymphocytes.

The protein resides in the cell membrane. The protein localises to the cytoplasmic vesicle. G-protein coupled opioid receptor that functions as a receptor for the endogenous neuropeptide nociceptin. Ligand binding causes a conformation change that triggers signaling via guanine nucleotide-binding proteins (G proteins) and modulates the activity of down-stream effectors. Signaling via G proteins mediates inhibition of adenylate cyclase activity and calcium channel activity. Arrestins modulate signaling via G proteins and mediate the activation of alternative signaling pathways that lead to the activation of MAP kinases. Plays a role in modulating nociception and the perception of pain. Plays a role in the regulation of locomotor activity by the neuropeptide nociceptin. This is Nociceptin receptor (Oprl1) from Mus musculus (Mouse).